A 175-amino-acid polypeptide reads, in one-letter code: Ribosome maturation factor RimM (175 aa).

The PRC barrel domain maps to 96–175; sequence EEDFYWRDLI…LIQVNWEPDF (80 aa).

This sequence belongs to the RimM family. In terms of assembly, binds ribosomal protein uS19.

The protein resides in the cytoplasm. Its function is as follows. An accessory protein needed during the final step in the assembly of 30S ribosomal subunit, possibly for assembly of the head region. Essential for efficient processing of 16S rRNA. May be needed both before and after RbfA during the maturation of 16S rRNA. It has affinity for free ribosomal 30S subunits but not for 70S ribosomes. In Psychromonas ingrahamii (strain DSM 17664 / CCUG 51855 / 37), this protein is Ribosome maturation factor RimM.